The sequence spans 551 residues: Adenine deaminase (551 aa).

The protein belongs to the metallo-dependent hydrolases superfamily. Adenine deaminase family. It depends on Mn(2+) as a cofactor.

The catalysed reaction is adenine + H2O + H(+) = hypoxanthine + NH4(+). The chain is Adenine deaminase from Leuconostoc mesenteroides subsp. mesenteroides (strain ATCC 8293 / DSM 20343 / BCRC 11652 / CCM 1803 / JCM 6124 / NCDO 523 / NBRC 100496 / NCIMB 8023 / NCTC 12954 / NRRL B-1118 / 37Y).